Here is a 276-residue protein sequence, read N- to C-terminus: Ribonuclease T2 (276 aa).

The first 17 residues, 1–17 (MGMLALGAMQLAAGAVF), serve as a signal peptide directing secretion. 5 disulfide bridges follow: C22-C41, C30-C77, C40-C143, C85-C135, and C208-C242. N32 carries N-linked (GlcNAc...) asparagine glycosylation. Residue H70 is part of the active site. N-linked (GlcNAc...) asparagine glycosylation occurs at N93. Active-site residues include E128 and H132. N-linked (GlcNAc...) asparagine glycosylation occurs at N256.

Belongs to the RNase T2 family.

It catalyses the reaction a ribonucleotidyl-ribonucleotide-RNA + H2O = a 3'-end 3'-phospho-ribonucleotide-RNA + a 5'-end dephospho-ribonucleoside-RNA + H(+). This is Ribonuclease T2 (rntB) from Aspergillus oryzae (strain ATCC 42149 / RIB 40) (Yellow koji mold).